The chain runs to 648 residues: Probable potassium transport system protein Kup 1 (648 aa).

The disordered stretch occupies residues 1-31 (MSDAVTDADGSSAQSHAQSAGHHAVQGHGGH). Residues 10-26 (GSSAQSHAQSAGHHAVQ) are compositionally biased toward low complexity. 12 consecutive transmembrane segments (helical) span residues 39–59 (LAVG…LYAL), 73–93 (LLHI…IVTF), 130–150 (IILL…ITPA), 165–185 (PDMH…LFFI), 193–213 (VAAF…VLGA), 243–263 (FLAM…YADM), 275–295 (WLVF…SLLI), 317–337 (LLFI…SGAF), 364–384 (IFIP…VLVF), 394–414 (YGIA…VVLF), 421–441 (APAA…YLGA), and 446–466 (IPDG…LLTT).

The protein belongs to the HAK/KUP transporter (TC 2.A.72) family.

Its subcellular location is the cell inner membrane. It catalyses the reaction K(+)(in) + H(+)(in) = K(+)(out) + H(+)(out). Its function is as follows. Transport of potassium into the cell. Likely operates as a K(+):H(+) symporter. The sequence is that of Probable potassium transport system protein Kup 1 from Novosphingobium aromaticivorans (strain ATCC 700278 / DSM 12444 / CCUG 56034 / CIP 105152 / NBRC 16084 / F199).